Consider the following 208-residue polypeptide: Small ribosomal subunit protein eS1 (208 aa).

It belongs to the eukaryotic ribosomal protein eS1 family.

The sequence is that of Small ribosomal subunit protein eS1 from Saccharolobus islandicus (strain Y.N.15.51 / Yellowstone #2) (Sulfolobus islandicus).